Reading from the N-terminus, the 612-residue chain is DNA mismatch repair protein MutL (612 aa).

It belongs to the DNA mismatch repair MutL/HexB family.

Its function is as follows. This protein is involved in the repair of mismatches in DNA. It is required for dam-dependent methyl-directed DNA mismatch repair. May act as a 'molecular matchmaker', a protein that promotes the formation of a stable complex between two or more DNA-binding proteins in an ATP-dependent manner without itself being part of a final effector complex. This chain is DNA mismatch repair protein MutL, found in Herminiimonas arsenicoxydans.